A 52-amino-acid polypeptide reads, in one-letter code: MEKVQYITRSALRRASTLEVNPQARQRLQELFVNFCLILICLLLICIIVMLL.

N-acetylmethionine is present on Met-1. The Cytoplasmic segment spans residues 1–31 (MEKVQYITRSALRRASTLEVNPQARQRLQEL). Ser-16 carries the phosphoserine; by PKA modification. At Thr-17 the chain carries Phosphothreonine; by CaMK. A helical membrane pass occupies residues 32–52 (FVNFCLILICLLLICIIVMLL).

The protein belongs to the phospholamban family. Homopentamer. In terms of processing, phosphorylated in response to beta-adrenergic stimulation. Phosphorylation by PKA abolishes the inhibition of ATP2A2-mediated calcium uptake. As to expression, heart.

It is found in the endoplasmic reticulum membrane. Its subcellular location is the sarcoplasmic reticulum membrane. It localises to the mitochondrion membrane. The protein resides in the membrane. In terms of biological role, reversibly inhibits the activity of ATP2A2/SERCA2 in cardiac sarcoplasmic reticulum by decreasing the apparent affinity of the ATPase for Ca(2+). Binds preferentially to the ATP-bound E1 conformational form of ATP2A2 which predominates at low Ca(2+) concentrations during the diastolic phase of the cardiac cycle. Inhibits ATP2A2 Ca(2+) affinity by disrupting its allosteric activation by ATP. Modulates the contractility of the heart muscle in response to physiological stimuli via its effects on ATP2A2. Modulates calcium re-uptake during muscle relaxation and plays an important role in calcium homeostasis in the heart muscle. The degree of ATP2A2 inhibition depends on the oligomeric state of PLN. ATP2A2 inhibition is alleviated by PLN phosphorylation. This chain is Phospholamban (PLN), found in Gallus gallus (Chicken).